A 340-amino-acid polypeptide reads, in one-letter code: Glyceraldehyde-3-phosphate dehydrogenase (340 aa).

NAD(+) is bound by residues 11–12 (TI) and Gly109. Position 138–140 (138–140 (SCN)) interacts with D-glyceraldehyde 3-phosphate. Cys139 acts as the Nucleophile in catalysis. Arg167 provides a ligand contact to NAD(+). D-glyceraldehyde 3-phosphate is bound at residue 193-194 (HA). Gln300 contributes to the NAD(+) binding site.

The protein belongs to the glyceraldehyde-3-phosphate dehydrogenase family. Homotetramer.

The protein resides in the cytoplasm. The enzyme catalyses D-glyceraldehyde 3-phosphate + phosphate + NADP(+) = (2R)-3-phospho-glyceroyl phosphate + NADPH + H(+). It catalyses the reaction D-glyceraldehyde 3-phosphate + phosphate + NAD(+) = (2R)-3-phospho-glyceroyl phosphate + NADH + H(+). It functions in the pathway carbohydrate degradation; glycolysis; pyruvate from D-glyceraldehyde 3-phosphate: step 1/5. In Metallosphaera sedula (strain ATCC 51363 / DSM 5348 / JCM 9185 / NBRC 15509 / TH2), this protein is Glyceraldehyde-3-phosphate dehydrogenase.